The primary structure comprises 357 residues: S-adenosyl-L-methionine:benzoic acid/salicylic acid carboxyl methyltransferase 3 (357 aa).

Tyr-18 serves as a coordination point for S-adenosyl-L-homocysteine. Position 25 (Gln-25) interacts with benzoate. Cys-59, Asn-64, Asp-96, Leu-97, Ser-135, and Phe-136 together coordinate S-adenosyl-L-homocysteine. Trp-157 lines the benzoate pocket. Mg(2+) is bound by residues Asn-168, Asp-254, Phe-256, and Asn-257. Position 260 (Gln-260) interacts with benzoate.

This sequence belongs to the methyltransferase superfamily. Type-7 methyltransferase family.

It carries out the reaction benzoate + S-adenosyl-L-methionine = methyl benzoate + S-adenosyl-L-homocysteine. The protein operates within aromatic compound metabolism. In terms of biological role, converts benzoic acid into the volatile ester methyl benzoates. This scent, mostly produced in a rhythmical, diurnal manner, attracts the pollinators. The sequence is that of S-adenosyl-L-methionine:benzoic acid/salicylic acid carboxyl methyltransferase 3 from Petunia hybrida (Petunia).